We begin with the raw amino-acid sequence, 530 residues long: T-complex protein 1 subunit zeta-2 (530 aa).

The protein belongs to the TCP-1 chaperonin family. In terms of assembly, component of the chaperonin-containing T-complex (TRiC), a heterooligomeric complex of about 850 to 900 kDa that forms two stacked rings, 12 to 16 nm in diameter. As to expression, testis-specific.

Its subcellular location is the cytoplasm. Functionally, component of the chaperonin-containing T-complex (TRiC), a molecular chaperone complex that assists the folding of proteins upon ATP hydrolysis. In Homo sapiens (Human), this protein is T-complex protein 1 subunit zeta-2 (CCT6B).